Consider the following 267-residue polypeptide: Flap endonuclease Xni (267 aa).

A Mg(2+)-binding site is contributed by Asp115. The 5'-3' exonuclease domain maps to 171–261 (VAPAQLVDFW…LGFNLREIRY (91 aa)). Residues Leu182, Val193, and Ile196 each contribute to the K(+) site. An interaction with DNA region spans residues 195-200 (GIGPKT).

It belongs to the Xni family. Mg(2+) serves as cofactor. The cofactor is K(+).

Its function is as follows. Has flap endonuclease activity. During DNA replication, flap endonucleases cleave the 5'-overhanging flap structure that is generated by displacement synthesis when DNA polymerase encounters the 5'-end of a downstream Okazaki fragment. This chain is Flap endonuclease Xni, found in Aeromonas hydrophila subsp. hydrophila (strain ATCC 7966 / DSM 30187 / BCRC 13018 / CCUG 14551 / JCM 1027 / KCTC 2358 / NCIMB 9240 / NCTC 8049).